Here is a 231-residue protein sequence, read N- to C-terminus: 5'-methylthioadenosine/S-adenosylhomocysteine nucleosidase (231 aa).

E12 acts as the Proton acceptor in catalysis. Residues G78, V153, and 174 to 175 (ME) contribute to the substrate site. The Proton donor role is filled by D198.

This sequence belongs to the PNP/UDP phosphorylase family. MtnN subfamily.

The catalysed reaction is S-adenosyl-L-homocysteine + H2O = S-(5-deoxy-D-ribos-5-yl)-L-homocysteine + adenine. It catalyses the reaction S-methyl-5'-thioadenosine + H2O = 5-(methylsulfanyl)-D-ribose + adenine. It carries out the reaction 5'-deoxyadenosine + H2O = 5-deoxy-D-ribose + adenine. The protein operates within amino-acid biosynthesis; L-methionine biosynthesis via salvage pathway; S-methyl-5-thio-alpha-D-ribose 1-phosphate from S-methyl-5'-thioadenosine (hydrolase route): step 1/2. Functionally, catalyzes the irreversible cleavage of the glycosidic bond in both 5'-methylthioadenosine (MTA) and S-adenosylhomocysteine (SAH/AdoHcy) to adenine and the corresponding thioribose, 5'-methylthioribose and S-ribosylhomocysteine, respectively. Also cleaves 5'-deoxyadenosine, a toxic by-product of radical S-adenosylmethionine (SAM) enzymes, into 5-deoxyribose and adenine. The protein is 5'-methylthioadenosine/S-adenosylhomocysteine nucleosidase of Vibrio vulnificus (strain YJ016).